The sequence spans 153 residues: Endoribonuclease YbeY (153 aa).

H114, H118, and H124 together coordinate Zn(2+).

Belongs to the endoribonuclease YbeY family. Zn(2+) is required as a cofactor.

The protein localises to the cytoplasm. Functionally, single strand-specific metallo-endoribonuclease involved in late-stage 70S ribosome quality control and in maturation of the 3' terminus of the 16S rRNA. The sequence is that of Endoribonuclease YbeY from Shewanella denitrificans (strain OS217 / ATCC BAA-1090 / DSM 15013).